Reading from the N-terminus, the 135-residue chain is Protein PsiE homolog (135 aa).

4 helical membrane-spanning segments follow: residues 20 to 40 (VGLI…TIHL), 54 to 74 (YMLI…ALIV), 82 to 102 (HFPL…LIIV), and 107 to 127 (PIDT…LYLA).

The protein belongs to the PsiE family.

The protein resides in the cell inner membrane. In Yersinia pseudotuberculosis serotype IB (strain PB1/+), this protein is Protein PsiE homolog.